Reading from the N-terminus, the 124-residue chain is Fluoride-specific ion channel FluC (124 aa).

Transmembrane regions (helical) follow at residues 1–21, 38–58, 69–89, and 99–119; these read MVPL…LRFA, TLAV…LFLI, GLMV…LDTV, and LALG…WAGL. Residues G76 and T79 each coordinate Na(+).

The protein belongs to the fluoride channel Fluc/FEX (TC 1.A.43) family.

The protein localises to the cell inner membrane. The enzyme catalyses fluoride(in) = fluoride(out). Na(+) is not transported, but it plays an essential structural role and its presence is essential for fluoride channel function. Functionally, fluoride-specific ion channel. Important for reducing fluoride concentration in the cell, thus reducing its toxicity. In Pseudomonas fluorescens (strain Pf0-1), this protein is Fluoride-specific ion channel FluC.